Consider the following 1365-residue polypeptide: Homeotic protein spalt-major (1365 aa).

Disordered regions lie at residues Ser47 to Leu194, Gln270 to Glu298, and Leu322 to Lys363. Composition is skewed to low complexity over residues Ser63–Arg76 and Glu87–Ser99. A compositionally biased stretch (basic and acidic residues) spans His103–Ile117. Low complexity predominate over residues Pro146–Glu157. The span at Ala159 to Glu181 shows a compositional bias: basic and acidic residues. Positions Glu275 to Glu298 are enriched in acidic residues. The span at His346 to Lys363 shows a compositional bias: basic and acidic residues. C2H2-type zinc fingers lie at residues His451–His473 and Phe479–His501. 2 disordered regions span residues Val508–Pro554 and Glu586–Gln716. The span at Met530–His539 shows a compositional bias: polar residues. Pro residues predominate over residues Ser540–Pro554. Composition is skewed to basic and acidic residues over residues Pro603–Glu622 and Val638–Arg662. A phosphoserine mark is found at Ser739 and Ser744. The disordered stretch occupies residues Pro740 to Ser772. C2H2-type zinc fingers lie at residues Asn824–His846, Phe852–His874, and His884–His906. Disordered stretches follow at residues Ala948 to Asp1012, Val1030 to Ser1129, and His1146 to Pro1241. The span at Asp976–Val991 shows a compositional bias: acidic residues. Positions Ser1040–Ala1054 are enriched in low complexity. Over residues Pro1055 to Ser1079 the composition is skewed to polar residues. A phosphoserine mark is found at Ser1076 and Ser1079. Low complexity-rich tracts occupy residues Leu1085–Pro1100, Arg1114–Ser1123, and His1146–Ala1168. Residues Gln1181–Ala1191 show a composition bias toward basic and acidic residues. Over residues Glu1192–Ala1218 the composition is skewed to low complexity. 2 C2H2-type zinc fingers span residues Thr1289 to His1311 and Phe1317 to His1339.

It belongs to the sal C2H2-type zinc-finger protein family.

It is found in the nucleus. Functionally, required for the establishment of the posterior-most head and the anterior-most tail segments of the embryo. Probably function as a transcriptional regulator. Could repress the transcription of the tsh gene. The sequence is that of Homeotic protein spalt-major (salm) from Drosophila melanogaster (Fruit fly).